We begin with the raw amino-acid sequence, 331 residues long: Major ferric iron-binding protein (331 aa).

The signal sequence occupies residues 1 to 22 (MKTSIRYALLAAALTAATPALA). Fe cation contacts are provided by histidine 31, glutamate 79, tyrosine 217, and tyrosine 218.

It belongs to the bacterial solute-binding protein 1 family.

It localises to the periplasm. In terms of biological role, this protein may be a central component in the iron-acquisition system. This chain is Major ferric iron-binding protein (fbpA), found in Neisseria meningitidis serogroup A / serotype 4A (strain DSM 15465 / Z2491).